We begin with the raw amino-acid sequence, 450 residues long: MSETPQKRLYIKTYGCQMNVYDSERMADVLRPLGYGIVDEPEGADLVVLNTCHIREKATEKVYSELGYIKQMKGRKAEAGGQMTVAVAGCVAQAEGQEIMRRQPAVDLVVGPQAYHQLPELIARAHRATGERLSADFAADEKFDALPAERQVSGVSAFLTVQEGCDKFCTFCVVPYTRGGEWSRPPEQIEDEARRLADQGVREVTLLGQNVNAYDGGGYTLARLVRRLAKIPGLDRIRYTTSHPRDMGDDLIEAHGELPELMPYLHLPVQAGSDKILKAMNRDHTAESYIRLIEKIRQARPDIAMSGDFIVGFPGERDGDFEKTLDLVREVGFASAFSFKYSRRPGTPASAMPGQVDEAVKAERLERLNQLLDEQQKAFNILQVGKTMPVLFEKKGRNPGQIVGRSPYLQAVHAVGSEDLLGQIVPVRIESSAKMSLGGVLETQPLPEPA.

One can recognise an MTTase N-terminal domain in the interval K7–R127. C16, C52, C90, C165, C169, and C172 together coordinate [4Fe-4S] cluster. The region spanning Q151–A378 is the Radical SAM core domain. In terms of domain architecture, TRAM spans I381–T443.

This sequence belongs to the methylthiotransferase family. MiaB subfamily. As to quaternary structure, monomer. [4Fe-4S] cluster is required as a cofactor.

Its subcellular location is the cytoplasm. It catalyses the reaction N(6)-dimethylallyladenosine(37) in tRNA + (sulfur carrier)-SH + AH2 + 2 S-adenosyl-L-methionine = 2-methylsulfanyl-N(6)-dimethylallyladenosine(37) in tRNA + (sulfur carrier)-H + 5'-deoxyadenosine + L-methionine + A + S-adenosyl-L-homocysteine + 2 H(+). Its function is as follows. Catalyzes the methylthiolation of N6-(dimethylallyl)adenosine (i(6)A), leading to the formation of 2-methylthio-N6-(dimethylallyl)adenosine (ms(2)i(6)A) at position 37 in tRNAs that read codons beginning with uridine. The polypeptide is tRNA-2-methylthio-N(6)-dimethylallyladenosine synthase (Caulobacter sp. (strain K31)).